Here is a 448-residue protein sequence, read N- to C-terminus: Phosphoglucosamine mutase (448 aa).

Ser100 serves as the catalytic Phosphoserine intermediate. Mg(2+) contacts are provided by Ser100, Asp240, Asp242, and Asp244. Ser100 is modified (phosphoserine).

Belongs to the phosphohexose mutase family. Mg(2+) is required as a cofactor. Post-translationally, activated by phosphorylation.

The catalysed reaction is alpha-D-glucosamine 1-phosphate = D-glucosamine 6-phosphate. Catalyzes the conversion of glucosamine-6-phosphate to glucosamine-1-phosphate. The chain is Phosphoglucosamine mutase from Bacillus pumilus (strain SAFR-032).